Reading from the N-terminus, the 349-residue chain is Phosphoribosylformylglycinamidine cyclo-ligase (349 aa).

The protein belongs to the AIR synthase family.

It localises to the cytoplasm. The catalysed reaction is 2-formamido-N(1)-(5-O-phospho-beta-D-ribosyl)acetamidine + ATP = 5-amino-1-(5-phospho-beta-D-ribosyl)imidazole + ADP + phosphate + H(+). Its pathway is purine metabolism; IMP biosynthesis via de novo pathway; 5-amino-1-(5-phospho-D-ribosyl)imidazole from N(2)-formyl-N(1)-(5-phospho-D-ribosyl)glycinamide: step 2/2. The protein is Phosphoribosylformylglycinamidine cyclo-ligase of Bordetella avium (strain 197N).